A 121-amino-acid chain; its full sequence is Prefoldin subunit beta (121 aa).

The protein belongs to the prefoldin subunit beta family. In terms of assembly, heterohexamer of two alpha and four beta subunits.

The protein resides in the cytoplasm. Functionally, molecular chaperone capable of stabilizing a range of proteins. Seems to fulfill an ATP-independent, HSP70-like function in archaeal de novo protein folding. This is Prefoldin subunit beta from Methanoculleus marisnigri (strain ATCC 35101 / DSM 1498 / JR1).